Consider the following 107-residue polypeptide: U1-lycotoxin-Ls1b (107 aa).

The first 20 residues, 1-20 (MMKVLVVVALLVTLISYSSS), serve as a signal peptide directing secretion. Residues 21 to 41 (EGIDDLEADELSSLMANEQTR) constitute a propeptide that is removed on maturation. 4 disulfides stabilise this stretch: C44–C59, C51–C68, C58–C86, and C70–C84.

The protein belongs to the neurotoxin 19 (CSTX) family. 04 (U1-Lctx) subfamily. In terms of tissue distribution, expressed by the venom gland.

The protein resides in the secreted. The protein is U1-lycotoxin-Ls1b of Lycosa singoriensis (Wolf spider).